A 150-amino-acid chain; its full sequence is Cytochrome c oxidase subunit 5A, mitochondrial (150 aa).

The transit peptide at 1–41 (MLGAALRRCAVAATTWAGPRGLLHSARTPGPAAAIQSVRCY) directs the protein to the mitochondrion. The SIFI-degron motif lies at 2-17 (LGAALRRCAVAATTWA). Residues K87 and K113 each carry the N6-acetyllysine modification. T141 carries the phosphothreonine modification.

This sequence belongs to the cytochrome c oxidase subunit 5A family. Component of the cytochrome c oxidase (complex IV, CIV), a multisubunit enzyme composed of 14 subunits. The complex is composed of a catalytic core of 3 subunits MT-CO1, MT-CO2 and MT-CO3, encoded in the mitochondrial DNA, and 11 supernumerary subunits COX4I, COX5A, COX5B, COX6A, COX6B, COX6C, COX7A, COX7B, COX7C, COX8 and NDUFA4, which are encoded in the nuclear genome. The complex exists as a monomer or a dimer and forms supercomplexes (SCs) in the inner mitochondrial membrane with NADH-ubiquinone oxidoreductase (complex I, CI) and ubiquinol-cytochrome c oxidoreductase (cytochrome b-c1 complex, complex III, CIII), resulting in different assemblies (supercomplex SCI(1)III(2)IV(1) and megacomplex MCI(2)III(2)IV(2)). Interacts with AFG1L. Interacts with RAB5IF. In terms of processing, in response to mitochondrial stress, the precursor protein is ubiquitinated by the SIFI complex in the cytoplasm before mitochondrial import, leading to its degradation. Within the SIFI complex, UBR4 initiates ubiquitin chain that are further elongated or branched by KCMF1.

It localises to the mitochondrion inner membrane. It functions in the pathway energy metabolism; oxidative phosphorylation. Its function is as follows. Component of the cytochrome c oxidase, the last enzyme in the mitochondrial electron transport chain which drives oxidative phosphorylation. The respiratory chain contains 3 multisubunit complexes succinate dehydrogenase (complex II, CII), ubiquinol-cytochrome c oxidoreductase (cytochrome b-c1 complex, complex III, CIII) and cytochrome c oxidase (complex IV, CIV), that cooperate to transfer electrons derived from NADH and succinate to molecular oxygen, creating an electrochemical gradient over the inner membrane that drives transmembrane transport and the ATP synthase. Cytochrome c oxidase is the component of the respiratory chain that catalyzes the reduction of oxygen to water. Electrons originating from reduced cytochrome c in the intermembrane space (IMS) are transferred via the dinuclear copper A center (CU(A)) of subunit 2 and heme A of subunit 1 to the active site in subunit 1, a binuclear center (BNC) formed by heme A3 and copper B (CU(B)). The BNC reduces molecular oxygen to 2 water molecules using 4 electrons from cytochrome c in the IMS and 4 protons from the mitochondrial matrix. This is Cytochrome c oxidase subunit 5A, mitochondrial (COX5A) from Papio anubis (Olive baboon).